The following is a 352-amino-acid chain: Ribosomal RNA large subunit methyltransferase M (352 aa).

S-adenosyl-L-methionine-binding positions include serine 184, 217 to 220 (APGG), aspartate 236, aspartate 256, and aspartate 272. Lysine 301 acts as the Proton acceptor in catalysis.

The protein belongs to the class I-like SAM-binding methyltransferase superfamily. RNA methyltransferase RlmE family. RlmM subfamily. As to quaternary structure, monomer.

Its subcellular location is the cytoplasm. The enzyme catalyses cytidine(2498) in 23S rRNA + S-adenosyl-L-methionine = 2'-O-methylcytidine(2498) in 23S rRNA + S-adenosyl-L-homocysteine + H(+). Catalyzes the 2'-O-methylation at nucleotide C2498 in 23S rRNA. This chain is Ribosomal RNA large subunit methyltransferase M, found in Pseudomonas paraeruginosa (strain DSM 24068 / PA7) (Pseudomonas aeruginosa (strain PA7)).